Here is a 661-residue protein sequence, read N- to C-terminus: B3 domain-containing protein Os12g0591400 (661 aa).

4 DNA-binding regions (TF-B3) span residues 2 to 95 (GDQK…FNPS), 197 to 290 (KTRC…FNPS), 437 to 535 (LYIT…FKES), and 562 to 658 (TNLT…IRKG).

The protein localises to the nucleus. This Oryza sativa subsp. japonica (Rice) protein is B3 domain-containing protein Os12g0591400.